A 477-amino-acid polypeptide reads, in one-letter code: Homeobox protein Meis2 (477 aa).

Positions 71-191 are required for interaction with PBX1; it reads DALKRDKDAI…KMPIDLVIDE (121 aa). One can recognise an MEIS N-terminal domain in the interval 110–193; that stretch reads GGDVCSSDSF…PIDLVIDERD (84 aa). Residues 193–203 are compositionally biased toward basic and acidic residues; sequence DGSSKSDHEEL. Residues 193 to 283 form a disordered region; the sequence is DGSSKSDHEE…KKRQKKRGIF (91 aa). 2 stretches are compositionally biased toward polar residues: residues 204–217 and 239–251; these read SGSSTNLADHNPSS and GHASQSGDNSSEQ. Residues 276–338 constitute a DNA-binding region (homeobox; TALE-type); that stretch reads RQKKRGIFPK…NARRRIVQPM (63 aa). Residues 299–333 are interaction with DNA; sequence LTHPYPSEEQKKQLAQDTGLTILQVNNWFINARRR. Residues 340–477 are transcriptional activation domain; it reads DQSNRAGFLL…GGQVMDIHAQ (138 aa).

It belongs to the TALE/MEIS homeobox family. As to quaternary structure, monomer and homodimer. Heterodimer with HOXB13. Isoform 2 interacts with TLX1. Isoform 3 interacts with HOXA13 and PBX1 isoform PBX1b. Isoform 4 interacts with SP1, SP3 and KLF4. Isoform 4 and isoform 5 interact with PBX1 isoform PBX1a; the interaction partially relieves MEIS2 autoinhibition. Isoform 3 also known as MEIS2b is part of a PDX1:PBX1b:Meis2B complex; Meis2B is recruited by PBX1b and can be replaced by isoform 4 in a small fraction of complexes. Can form trimeric complexes including HOXB8 and PBX2 or PBX3. As to expression, expressed in various tissues. Expressed at high level in the lymphoid organs of hematopoietic tissues. Also expressed in some regions of the brain, such as the putamen.

Its subcellular location is the nucleus. The protein resides in the cytoplasm. The protein localises to the perinuclear region. In terms of biological role, involved in transcriptional regulation. Binds to HOX or PBX proteins to form dimers, or to a DNA-bound dimer of PBX and HOX proteins and thought to have a role in stabilization of the homeoprotein-DNA complex. Isoform 3 is required for the activity of a PDX1:PBX1b:MEIS2b complex in pancreatic acinar cells involved in the transcriptional activation of the ELA1 enhancer; the complex binds to the enhancer B element and cooperates with the transcription factor 1 complex (PTF1) bound to the enhancer A element; MEIS2 is not involved in complex DNA-binding. Probably in complex with PBX1, is involved in transcriptional regulation by KLF4. Isoform 3 and isoform 4 can bind to a EPHA8 promoter sequence containing the DNA motif 5'-CGGTCA-3'; in cooperation with a PBX protein (such as PBX2) is proposed to be involved in the transcriptional activation of EPHA8 in the developing midbrain. May be involved in regulation of myeloid differentiation. Can bind to the DNA sequence 5'-TGACAG-3'in the activator ACT sequence of the D(1A) dopamine receptor (DRD1) promoter and activate DRD1 transcription; isoform 5 cannot activate DRD1 transcription. The sequence is that of Homeobox protein Meis2 (MEIS2) from Homo sapiens (Human).